Here is a 100-residue protein sequence, read N- to C-terminus: uncharacterized protein (100 aa).

Residue lysine 98 forms an Isoglutamyl lysine isopeptide (Lys-Gln) (interchain with Q-Cter in protein Pup) linkage.

This is an uncharacterized protein from Mycobacterium tuberculosis (strain CDC 1551 / Oshkosh).